We begin with the raw amino-acid sequence, 71 residues long: Probable ribosome maturation protein RlbA (71 aa).

The region spanning 12–69 is the S4 RNA-binding domain; sequence ITLGQFLKLADVIQSGGMAKWFLSEHEVLVNDEPDNRRGRKLYVGDVVEIEGFGSFQV.

In terms of biological role, may assist in the assembly of the 50S subunit. The protein is Probable ribosome maturation protein RlbA of Bacillus subtilis (strain 168).